The sequence spans 330 residues: Protoheme IX farnesyltransferase (330 aa).

The next 9 membrane-spanning stretches (helical) occupy residues 30-50, 58-78, 106-126, 127-147, 155-175, 182-202, 228-248, 249-269, and 281-301; these read LVKPKIIALLLMTTAGAMWMA, FFITLLGGGIAAAAANVINMV, LIFSGILALAAFGLLAIFTNL, LAAGLAMSGILVYVGVYTHWL, IVIGGAAGAIPPLVGWAATTG, WVMFAIIFLWTPPHFWALAIL, ILLYALLMVPVSLLLVYPLGM, LGSFYLSAAALLGSLLVWKAV, and AASLFTFANLYLLLLCGAMGL.

It belongs to the UbiA prenyltransferase family. Protoheme IX farnesyltransferase subfamily.

The protein resides in the cell inner membrane. It carries out the reaction heme b + (2E,6E)-farnesyl diphosphate + H2O = Fe(II)-heme o + diphosphate. The protein operates within porphyrin-containing compound metabolism; heme O biosynthesis; heme O from protoheme: step 1/1. Converts heme B (protoheme IX) to heme O by substitution of the vinyl group on carbon 2 of heme B porphyrin ring with a hydroxyethyl farnesyl side group. In Synechococcus sp. (strain JA-2-3B'a(2-13)) (Cyanobacteria bacterium Yellowstone B-Prime), this protein is Protoheme IX farnesyltransferase.